A 701-amino-acid chain; its full sequence is Elongation factor G (701 aa).

In terms of domain architecture, tr-type G spans 8 to 286; the sequence is ERIRNIGIIA…AIVHYLPSPV (279 aa). Residues 17–24, 85–89, and 139–142 contribute to the GTP site; these read AHIDAGKT, DTPGH, and NKMD.

The protein belongs to the TRAFAC class translation factor GTPase superfamily. Classic translation factor GTPase family. EF-G/EF-2 subfamily.

It localises to the cytoplasm. Functionally, catalyzes the GTP-dependent ribosomal translocation step during translation elongation. During this step, the ribosome changes from the pre-translocational (PRE) to the post-translocational (POST) state as the newly formed A-site-bound peptidyl-tRNA and P-site-bound deacylated tRNA move to the P and E sites, respectively. Catalyzes the coordinated movement of the two tRNA molecules, the mRNA and conformational changes in the ribosome. This is Elongation factor G from Roseiflexus sp. (strain RS-1).